We begin with the raw amino-acid sequence, 50 residues long: Temporin-SHc (50 aa).

An N-terminal signal peptide occupies residues 1 to 10 (FLGTINLSLC). The propeptide occupies 11 to 35 (EQERDADEEERRDEPDGSNVEVEKR). A Phenylalanine amide modification is found at F48.

In terms of tissue distribution, expressed by the skin glands.

Its subcellular location is the secreted. It localises to the target cell membrane. Its function is as follows. Amphipathic alpha-helical antimicrobial peptide with potent activity against some Gram-positive bacteria (MIC=4-&gt;80 uM), potent activity against fungi (MIC=10-20 uM), and no activity against Gram-negative bacteria. Does not display anti-leishmania activity. Does not show hemolytic activity (LC(50)&gt;80 uM). The protein is Temporin-SHc of Pelophylax saharicus (Sahara frog).